The chain runs to 329 residues: Malate dehydrogenase (329 aa).

12 to 18 (GAAGQIG) is an NAD(+) binding site. Arg-93 and Arg-99 together coordinate substrate. NAD(+)-binding positions include Asn-106, Gln-113, and 130–132 (TGN). Substrate is bound by residues Asn-132 and Arg-163. The active-site Proton acceptor is His-188.

It belongs to the LDH/MDH superfamily. MDH type 2 family.

It catalyses the reaction (S)-malate + NAD(+) = oxaloacetate + NADH + H(+). Functionally, catalyzes the reversible oxidation of malate to oxaloacetate. The chain is Malate dehydrogenase from Mycobacterium leprae (strain TN).